Consider the following 236-residue polypeptide: Giant extracellular hemoglobin linker 2 chain (236 aa).

The LDL-receptor class A domain maps to Asn-66–Ile-108. 3 cysteine pairs are disulfide-bonded: Cys-68–Cys-82, Cys-75–Cys-95, and Cys-89–Cys-106.

As to quaternary structure, disulfide-linked dimer of identical chains. A model is proposed for the subunit structure of the Tylorrhynchus hemoglobin, consisting of 216 polypeptides chains, 192 heme-containing chains, and 24 linker chains.

Acts as a linker for the assembly of heme-containing chains in the construction of giant hemoglobin. This is Giant extracellular hemoglobin linker 2 chain from Tylorrhynchus heterochetus (Japanese palolo worm).